We begin with the raw amino-acid sequence, 208 residues long: Small ribosomal subunit protein uS4 (208 aa).

One can recognise an S4 RNA-binding domain in the interval 97 to 158 (TRLDNVIYRM…RAQKYLCVQE (62 aa)).

The protein belongs to the universal ribosomal protein uS4 family. As to quaternary structure, part of the 30S ribosomal subunit. Contacts protein S5. The interaction surface between S4 and S5 is involved in control of translational fidelity.

In terms of biological role, one of the primary rRNA binding proteins, it binds directly to 16S rRNA where it nucleates assembly of the body of the 30S subunit. With S5 and S12 plays an important role in translational accuracy. The sequence is that of Small ribosomal subunit protein uS4 from Xylella fastidiosa (strain M12).